A 47-amino-acid chain; its full sequence is Defensin-like protein 1 (47 aa).

4 disulfides stabilise this stretch: cysteine 5–cysteine 47, cysteine 16–cysteine 36, cysteine 22–cysteine 43, and cysteine 26–cysteine 45.

The protein belongs to the DEFL family.

Its function is as follows. Fabatins have antibacterial activity against Gram-positive and Gram-negative bacteria. High activity against P.aeruginosa. No activity against S.cerevisiae and C.albicans. This chain is Defensin-like protein 1, found in Vicia faba (Broad bean).